Reading from the N-terminus, the 211-residue chain is Imidazole glycerol phosphate synthase subunit HisH (211 aa).

The Glutamine amidotransferase type-1 domain occupies 1–211 (MIGIIDYGMG…VGIATGRGNG (211 aa)). Cys-79 serves as the catalytic Nucleophile. Active-site residues include His-186 and Glu-188.

In terms of assembly, heterodimer of HisH and HisF.

It is found in the cytoplasm. The enzyme catalyses 5-[(5-phospho-1-deoxy-D-ribulos-1-ylimino)methylamino]-1-(5-phospho-beta-D-ribosyl)imidazole-4-carboxamide + L-glutamine = D-erythro-1-(imidazol-4-yl)glycerol 3-phosphate + 5-amino-1-(5-phospho-beta-D-ribosyl)imidazole-4-carboxamide + L-glutamate + H(+). It catalyses the reaction L-glutamine + H2O = L-glutamate + NH4(+). Its pathway is amino-acid biosynthesis; L-histidine biosynthesis; L-histidine from 5-phospho-alpha-D-ribose 1-diphosphate: step 5/9. Its function is as follows. IGPS catalyzes the conversion of PRFAR and glutamine to IGP, AICAR and glutamate. The HisH subunit catalyzes the hydrolysis of glutamine to glutamate and ammonia as part of the synthesis of IGP and AICAR. The resulting ammonia molecule is channeled to the active site of HisF. This is Imidazole glycerol phosphate synthase subunit HisH from Geobacillus kaustophilus (strain HTA426).